Reading from the N-terminus, the 216-residue chain is Octanoyltransferase (216 aa).

One can recognise a BPL/LPL catalytic domain in the interval 35-213 (NSNPDFIWIG…IIQEEFNFDF (179 aa)). Substrate is bound by residues 77–84 (RGGEVTCH), 144–146 (SIG), and 157–159 (GFS). The active-site Acyl-thioester intermediate is the C175.

This sequence belongs to the LipB family.

Its subcellular location is the cytoplasm. It carries out the reaction octanoyl-[ACP] + L-lysyl-[protein] = N(6)-octanoyl-L-lysyl-[protein] + holo-[ACP] + H(+). It functions in the pathway protein modification; protein lipoylation via endogenous pathway; protein N(6)-(lipoyl)lysine from octanoyl-[acyl-carrier-protein]: step 1/2. Functionally, catalyzes the transfer of endogenously produced octanoic acid from octanoyl-acyl-carrier-protein onto the lipoyl domains of lipoate-dependent enzymes. Lipoyl-ACP can also act as a substrate although octanoyl-ACP is likely to be the physiological substrate. This chain is Octanoyltransferase, found in Prochlorococcus marinus (strain MIT 9215).